We begin with the raw amino-acid sequence, 76 residues long: Exodeoxyribonuclease 7 small subunit (76 aa).

This sequence belongs to the XseB family. As to quaternary structure, heterooligomer composed of large and small subunits.

It is found in the cytoplasm. The catalysed reaction is Exonucleolytic cleavage in either 5'- to 3'- or 3'- to 5'-direction to yield nucleoside 5'-phosphates.. Its function is as follows. Bidirectionally degrades single-stranded DNA into large acid-insoluble oligonucleotides, which are then degraded further into small acid-soluble oligonucleotides. The chain is Exodeoxyribonuclease 7 small subunit from Legionella pneumophila subsp. pneumophila (strain Philadelphia 1 / ATCC 33152 / DSM 7513).